The sequence spans 230 residues: Ribonuclease 3 (230 aa).

An RNase III domain is found at 5-134; that stretch reads EALLENSFNI…FLGALLLDKG (130 aa). E47 lines the Mg(2+) pocket. Residue D51 is part of the active site. Mg(2+)-binding residues include D120 and E123. Residue E123 is part of the active site. The region spanning 160–229 is the DRBM domain; it reads DYKTCLQELL…AKNALAQLSE (70 aa).

This sequence belongs to the ribonuclease III family. As to quaternary structure, homodimer. Requires Mg(2+) as cofactor.

The protein resides in the cytoplasm. The enzyme catalyses Endonucleolytic cleavage to 5'-phosphomonoester.. Digests double-stranded RNA. Involved in the processing of primary rRNA transcript to yield the immediate precursors to the large and small rRNAs (23S and 16S). Processes some mRNAs, and tRNAs when they are encoded in the rRNA operon. Processes pre-crRNA and tracrRNA of type II CRISPR loci if present in the organism. This is Ribonuclease 3 from Streptococcus equi subsp. zooepidemicus (strain H70).